The sequence spans 1270 residues: Nuclear exosome regulator NRDE2 (1270 aa).

Disordered regions lie at residues 1–22 and 119–209; these read MFRA…ENPD and SVKS…HTLM. A compositionally biased stretch (polar residues) spans 119–135; that stretch reads SVKSLNGCQDPPETSQQ. Over residues 164-184 the composition is skewed to basic residues; that stretch reads QRSRSREKKRRKKERRRKRSS. Over residues 192 to 204 the composition is skewed to basic and acidic residues; that stretch reads RSRDRSSRARDTS.

The protein belongs to the NRDE2 family. Interacts with nrde-3.

It localises to the nucleus. The protein resides in the nucleus speckle. Its subcellular location is the nucleolus. Functionally, protein of the nuclear speckles that regulates RNA exosomal degradation. Involved in short interfering RNAs-mediated silencing in nuclei. Functions with nrde-3 in the nuclear RNA-mediated gene silencing (RNAi) pathway to regulate gene expression via inhibition of RNA polymerases I and II during the elongation phase of transcription. Required for exogenous RNAi-induced H3K27 methylation. This chain is Nuclear exosome regulator NRDE2 (nrde-2), found in Caenorhabditis elegans.